Here is a 523-residue protein sequence, read N- to C-terminus: Metalloprotease TIKI2 (523 aa).

Positions 1-26 (MGKTMWARAVFLCFSVGTLLWQEVLT) are cleaved as a signal peptide. The Extracellular segment spans residues 27 to 499 (RRIPVDTGQC…HSQSNSSPKC (473 aa)). Asn225, Asn234, Asn283, and Asn341 each carry an N-linked (GlcNAc...) asparagine glycan. A helical transmembrane segment spans residues 500 to 516 (LSASPAFLYTLVTLCLI). Over 517–523 (TTMRTRS) the chain is Cytoplasmic.

It belongs to the TIKI family. It depends on Mn(2+) as a cofactor. Co(2+) serves as cofactor.

Its subcellular location is the cell membrane. Functionally, metalloprotease that acts as a negative regulator of the Wnt signaling pathway by mediating the cleavage of the N-terminal residues of a subset of Wnt proteins. Following cleavage, Wnt proteins become oxidized and form large disulfide-bond oligomers, leading to their inactivation. Able to cleave wnt8. Required for head formation. This Xenopus tropicalis (Western clawed frog) protein is Metalloprotease TIKI2 (trabd2b).